A 119-amino-acid chain; its full sequence is Divalent-cation tolerance protein CutA (119 aa).

Cu cation is bound by residues C23, H90, and H91.

The protein belongs to the CutA family. As to quaternary structure, homotrimer. It depends on Cu cation as a cofactor.

The protein localises to the cytoplasm. Involved in resistance toward heavy metals. This Yersinia pseudotuberculosis serotype O:1b (strain IP 31758) protein is Divalent-cation tolerance protein CutA.